We begin with the raw amino-acid sequence, 447 residues long: MTTILKHLPVGQRIGIAFSGGLDTSAALLWMRQKGAVPYAYTANLGQPDEEDYDAIPRRAMEYGAENARLIDCRKQLVAEGIAAIQCGAFHNTTGGLTYFNTTPLGRAVTGTMLVAAMKEDGVNIWGDGSTYKGNDIERFYRYGLLTNAELQIYKPWLDTDFIDELGGRHEMSEFMIACGFDYKMSVEKAYSTDSNMLGATHEAKDLEYLNSSVKIVNPIMGVKFWDESVKIPAEEVTVRFEQGHPVALNGKTFSNDVEMMLEANRIGGRHGLGMSDQIENRIIEAKSRGIYEAPGMALLHIAYERLLTGIHNEDTIEQYHAHGRQLGRLLYQGRWFDSQALMLRDSLQRWVASQITGEVTLELRRGNDYSILNTVSENLTYKPERLTMEKGDSVFSPDDRIGQLTMRNLDITDTREKLFGYAKTGLLSSSATSGVPQVENMENKGQ.

ATP contacts are provided by residues 17 to 25 and Ala43; that span reads AFSGGLDTS. An L-citrulline-binding site is contributed by Tyr99. Residues Gly129 and Thr131 each contribute to the ATP site. L-aspartate is bound by residues Thr131, Asn135, and Asp136. Asn135 contacts L-citrulline. Residue Asp136 coordinates ATP. L-citrulline contacts are provided by Arg139 and Ser192. Asp194 contacts ATP. Residues Thr201, Glu203, and Glu280 each contribute to the L-citrulline site.

It belongs to the argininosuccinate synthase family. Type 2 subfamily. As to quaternary structure, homotetramer.

Its subcellular location is the cytoplasm. It catalyses the reaction L-citrulline + L-aspartate + ATP = 2-(N(omega)-L-arginino)succinate + AMP + diphosphate + H(+). It functions in the pathway amino-acid biosynthesis; L-arginine biosynthesis; L-arginine from L-ornithine and carbamoyl phosphate: step 2/3. This Shigella boydii serotype 18 (strain CDC 3083-94 / BS512) protein is Argininosuccinate synthase.